The chain runs to 444 residues: Crh-like protein 3 (444 aa).

An N-terminal signal peptide occupies residues 1-19 (MVGKSTLLSVLASASVAFA). Residues Cys-27 and Cys-34 are joined by a disulfide bond. A GH16 domain is found at 57–271 (SLESCVPEPV…WAGGEIDWNS (215 aa)). Catalysis depends on Glu-157, which acts as the Nucleophile. The active-site Proton donor is Glu-161. Chitin is bound at residue Glu-161. Residues Asn-187 and Asn-228 are each glycosylated (N-linked (GlcNAc...) asparagine). Positions 248 and 259 each coordinate chitin. N-linked (GlcNAc...) asparagine glycans are attached at residues Asn-315, Asn-323, Asn-336, and Asn-371. A lipid anchor (GPI-anchor amidated serine) is attached at Ser-415. Residues 416-444 (ADSLVANQERVLKGSLFAGIVAVVAMMAL) constitute a propeptide, removed in mature form.

The protein belongs to the glycosyl hydrolase 16 family. CRH1 subfamily. As to quaternary structure, forms homodimers as well as heterodimers with other crh protein members crh1 and crh2. Dimerization may be necessary for the transglycosylation activity.

Its subcellular location is the cell membrane. It carries out the reaction Random endo-hydrolysis of N-acetyl-beta-D-glucosaminide (1-&gt;4)-beta-linkages in chitin and chitodextrins.. Functionally, dual chitinase/transglycosylase that plays a role in cell wall architecture. Chitinase and transglycosylase activities are coupled. Required for the polysaccharide cross-linking at the septa and the cell wall. More specifically, transfers chitin to 1,6-beta-glucan in the cell wall. The sequence is that of Crh-like protein 3 from Botryotinia fuckeliana (strain B05.10) (Noble rot fungus).